A 175-amino-acid chain; its full sequence is Adenine phosphoribosyltransferase (175 aa).

Belongs to the purine/pyrimidine phosphoribosyltransferase family. In terms of assembly, homodimer.

It is found in the cytoplasm. It carries out the reaction AMP + diphosphate = 5-phospho-alpha-D-ribose 1-diphosphate + adenine. It participates in purine metabolism; AMP biosynthesis via salvage pathway; AMP from adenine: step 1/1. Catalyzes a salvage reaction resulting in the formation of AMP, that is energically less costly than de novo synthesis. The chain is Adenine phosphoribosyltransferase from Lacticaseibacillus paracasei (strain ATCC 334 / BCRC 17002 / CCUG 31169 / CIP 107868 / KCTC 3260 / NRRL B-441) (Lactobacillus paracasei).